Reading from the N-terminus, the 220-residue chain is Deoxyribose-phosphate aldolase 2 (220 aa).

D89 (proton donor/acceptor) is an active-site residue. The active-site Schiff-base intermediate with acetaldehyde is the K151. K180 serves as the catalytic Proton donor/acceptor.

The protein belongs to the DeoC/FbaB aldolase family. DeoC type 1 subfamily.

Its subcellular location is the cytoplasm. It catalyses the reaction 2-deoxy-D-ribose 5-phosphate = D-glyceraldehyde 3-phosphate + acetaldehyde. Its pathway is carbohydrate degradation; 2-deoxy-D-ribose 1-phosphate degradation; D-glyceraldehyde 3-phosphate and acetaldehyde from 2-deoxy-alpha-D-ribose 1-phosphate: step 2/2. Its function is as follows. Catalyzes a reversible aldol reaction between acetaldehyde and D-glyceraldehyde 3-phosphate to generate 2-deoxy-D-ribose 5-phosphate. In Staphylococcus aureus (strain COL), this protein is Deoxyribose-phosphate aldolase 2.